The chain runs to 187 residues: Protein GrpE (187 aa).

A disordered region spans residues 1-23 (MNNEKELKKEETSVENKEKKVAT).

It belongs to the GrpE family. In terms of assembly, homodimer.

It localises to the cytoplasm. Functionally, participates actively in the response to hyperosmotic and heat shock by preventing the aggregation of stress-denatured proteins, in association with DnaK and GrpE. It is the nucleotide exchange factor for DnaK and may function as a thermosensor. Unfolded proteins bind initially to DnaJ; upon interaction with the DnaJ-bound protein, DnaK hydrolyzes its bound ATP, resulting in the formation of a stable complex. GrpE releases ADP from DnaK; ATP binding to DnaK triggers the release of the substrate protein, thus completing the reaction cycle. Several rounds of ATP-dependent interactions between DnaJ, DnaK and GrpE are required for fully efficient folding. The sequence is that of Protein GrpE from Mesoplasma florum (strain ATCC 33453 / NBRC 100688 / NCTC 11704 / L1) (Acholeplasma florum).